Consider the following 201-residue polypeptide: Recombination protein RecR (201 aa).

The segment at 60 to 75 (CSRCGNVDTVDPCTVC) adopts a C4-type zinc-finger fold. The Toprim domain maps to 83-178 (SIIIVVEDVS…KITRLAHGVP (96 aa)).

It belongs to the RecR family.

In terms of biological role, may play a role in DNA repair. It seems to be involved in an RecBC-independent recombinational process of DNA repair. It may act with RecF and RecO. The chain is Recombination protein RecR from Rhizobium leguminosarum bv. trifolii (strain WSM2304).